The primary structure comprises 247 residues: MSHRDTLFSAPIARLGDWTFDERVAEVFPDMIQRSVPGYSNIISMIGMLAERFVQPGTQVYDLGCSLGAATLSVRRNIHHDNCKIIAIDNSPAMIERCRRHIDAYKAPTPVDVIEGDIRNIAIENASMVVLNFTLQFLEPSERQALLDKIYQGLNPGGALVLSEKFSFEDAKVGELLFNMHHDFKRANGYSELEISQKRSMLENVMLTDSVETHKARLHQAGFEHSELWFQCFNFGSLVALKAEDAA.

Residues Y39, 64 to 66, 89 to 90, 117 to 118, N132, and R199 contribute to the S-adenosyl-L-methionine site; these read GCS, DN, and DI.

This sequence belongs to the class I-like SAM-binding methyltransferase superfamily. Cx-SAM synthase family. In terms of assembly, homodimer.

It catalyses the reaction prephenate + S-adenosyl-L-methionine = carboxy-S-adenosyl-L-methionine + 3-phenylpyruvate + H2O. Functionally, catalyzes the conversion of S-adenosyl-L-methionine (SAM) to carboxy-S-adenosyl-L-methionine (Cx-SAM). The sequence is that of Carboxy-S-adenosyl-L-methionine synthase from Escherichia coli O17:K52:H18 (strain UMN026 / ExPEC).